Reading from the N-terminus, the 293-residue chain is Probable aspartoacylase (293 aa).

The Zn(2+) site is built by His-14 and Glu-17. Substrate is bound by residues Arg-56 and Asn-63–Arg-64. His-106 contributes to the Zn(2+) binding site. Substrate is bound by residues Glu-165 and Tyr-276.

The protein belongs to the AspA/AstE family. Aspartoacylase subfamily. Zn(2+) serves as cofactor.

It catalyses the reaction an N-acyl-L-aspartate + H2O = a carboxylate + L-aspartate. The polypeptide is Probable aspartoacylase (Trichodesmium erythraeum (strain IMS101)).